The chain runs to 574 residues: E3 ubiquitin-protein ligase TRIM23 (574 aa).

The RING-type; degenerate zinc finger occupies 31 to 76 (CGVCEDVFSLQGDKVPRLLLCGHTVCHDCLTRLPLHGRAIRCPFDR). The B box-type; degenerate zinc-finger motif lies at 122–168 (ESIIRCDEDEAHLASVYCTVCATHLCSECSQVTHSTKTLAKHRRVPL). Residues 352 to 379 (RVVLAKQEITRLLETLQKQQQQFTEVAD) are a coiled coil. An ARF-like region spans residues 390–574 (TFTKDNRVHI…LVAAGVLDVA (185 aa)). GTP-binding positions include 411-418 (GLDGAGKT), 454-458 (DVGGK), and 513-516 (NKQD).

The protein in the C-terminal section; belongs to the small GTPase superfamily. Arf family. Homodimer. Interacts with PSCD1. Interacts with UBE2D2. Interacts with TBK1 (via N-terminal kinase domain) and p62/SQSTM1. As to quaternary structure, (Microbial infection) Interacts with human cytomegalovirus protein UL144; this interaction might cause autoubiquitination of TRAF6, leading to NF-kappa-B activation.

It localises to the cytoplasm. It is found in the endomembrane system. The protein resides in the golgi apparatus membrane. Its subcellular location is the lysosome membrane. It catalyses the reaction S-ubiquitinyl-[E2 ubiquitin-conjugating enzyme]-L-cysteine + [acceptor protein]-L-lysine = [E2 ubiquitin-conjugating enzyme]-L-cysteine + N(6)-ubiquitinyl-[acceptor protein]-L-lysine.. It participates in protein modification; protein ubiquitination. Its function is as follows. Acts as an E3 ubiquitin-protein ligase. Plays an essential role in autophagy activation during viral infection. Mechanistically, activates TANK-binding kinase 1/TBK1 by facilitating its dimerization and ability to phosphorylate the selective autophagy receptor SQSTM1. In order to achieve this function, TRIM23 mediates 'Lys-27'-linked auto-ubiquitination of its ADP-ribosylation factor (ARF) domain to induce its GTPase activity and its recruitment to autophagosomes. (Microbial infection) Mediates TRAF6 auto-ubiquitination in the presence of human cytomegalovirus protein UL144, resulting in the virally controlled activation of NF-kappa-B stimulation at early times of HCMV infection. The chain is E3 ubiquitin-protein ligase TRIM23 (TRIM23) from Homo sapiens (Human).